The chain runs to 156 residues: Small ribosomal subunit protein uS7c (156 aa).

It belongs to the universal ribosomal protein uS7 family. In terms of assembly, part of the 30S ribosomal subunit.

It localises to the plastid. The protein localises to the chloroplast. One of the primary rRNA binding proteins, it binds directly to 16S rRNA where it nucleates assembly of the head domain of the 30S subunit. In Pyropia yezoensis (Susabi-nori), this protein is Small ribosomal subunit protein uS7c (rps7).